We begin with the raw amino-acid sequence, 1024 residues long: PH and SEC7 domain-containing protein 1 (1024 aa).

The tract at residues 67–96 is disordered; sequence CTPLRAPPSPHIAPSPWGPSSPTGQPPPGA. The segment covering 71–95 has biased composition (pro residues); that stretch reads RAPPSPHIAPSPWGPSSPTGQPPPG. A phosphoserine mark is found at serine 126 and serine 156. Disordered regions lie at residues 154-195, 250-277, 307-401, and 434-536; these read STSD…LPNG, PSSG…VAVG, REEA…GPDS, and PTQS…LDST. Over residues 348–365 the composition is skewed to acidic residues; sequence NEDDEAGGEEDVDDEVFE. The span at 445-463 shows a compositional bias: pro residues; that stretch reads PPQPPAPRPDPPAPAPLAP. The segment covering 495-507 has biased composition (basic and acidic residues); sequence PRKELPSPSHSED. Positions 512–706 constitute an SEC7 domain; that stretch reads GAAPLGSEPP…KALYSSIKNE (195 aa). A Phosphoserine modification is found at serine 720. The 114-residue stretch at 756-869 folds into the PH domain; sequence AVYKHGALVR…WITRINVVAA (114 aa). Coiled-coil stretches lie at residues 898-924 and 956-983; these read LSQE…HRAA and AALL…AGST. Residues 976 to 1024 form a disordered region; that stretch reads ALAQAGSTEDGCPPPHSSPSLRPKPTSQPRAQRPGSETRAGAGSTRPKP.

This sequence belongs to the PSD family. Interacts with ACTN1. Interacts (ARF6-bound form) with KCNK1; does not interact with KCNK1 in the absence of ARF6. As to expression, highest expression detected in brain and some expression detected also in uterus, stomach, ovary and intestine, with isoform 2 being expressed at the highest levels. In the brain, isoform 1 is highly expressed in the strata oriens, radiatum, lacunosum-moleculare of the hippocampal CA1-3 regions and the dentate molecular layer of the hippocampal formation, with lower levels detected in the neuronal cell layers and the stratum lucidum (at protein level). Not detected in tongue, thymus, spleen, lung, heart, liver and kidney.

The protein resides in the cell membrane. It localises to the cell projection. The protein localises to the ruffle. Its subcellular location is the ruffle membrane. It is found in the cleavage furrow. Its function is as follows. Guanine nucleotide exchange factor for ARF6. Isoform 2 and isoform 3 induce cytoskeletal remodeling, but lead to distinct morphological changes in HeLa cells: isoform 2 induces cell elongation and formation of actin-rich protrusions, whereas isoform 3 promotes the formation of membrane ruffles and loss of stress fibers. The polypeptide is PH and SEC7 domain-containing protein 1 (Psd) (Mus musculus (Mouse)).